We begin with the raw amino-acid sequence, 159 residues long: UPF0336 protein MAP_4107 (159 aa).

This sequence belongs to the UPF0336 family.

The sequence is that of UPF0336 protein MAP_4107 from Mycolicibacterium paratuberculosis (strain ATCC BAA-968 / K-10) (Mycobacterium paratuberculosis).